Reading from the N-terminus, the 285-residue chain is uncharacterized protein (285 aa).

Residues 6–26 traverse the membrane as a helical segment; that stretch reads IKYFSTIIVAVVAVLAGWWLW.

This sequence belongs to the membrane fusion protein (MFP) (TC 8.A.1) family.

It is found in the membrane. This is an uncharacterized protein from Escherichia coli (strain K12).